The chain runs to 142 residues: Salivary protein 15b (142 aa).

The signal sequence occupies residues 1–20 (MKYLGLALISAVFLIGTCQA). Disulfide bonds link C27/C44, C40/C108, and C91/C117.

The protein belongs to the PBP/GOBP family. As to expression, female salivary gland.

It is found in the secreted. Inhibits contact coagulation pathway activation in the host by sequestering anionic polymers, such as dextran sulfate and heparin, and thus blocking interaction of protein components of the pathway with negatively charged surfaces. Inhibits dextran sulfate-mediated autoactivation of host coagulation factor XII (F12). Inhibits dextran sulfate-mediated activation of host factor XI (F11) by activated F12. Inhibits polyphosphate-induced plasma extravasation at the injection site in mouse model, probably via inhibition of bradykinin generation in host skin. This Phlebotomus duboscqi (Sandfly) protein is Salivary protein 15b.